The chain runs to 164 residues: Phosphopantetheine adenylyltransferase (164 aa).

Ser9 provides a ligand contact to substrate. ATP is bound by residues 9 to 10 and His17; that span reads SF. Lys41, Leu73, and Lys87 together coordinate substrate. ATP contacts are provided by residues 88–90, Glu98, and 123–129; these read GLR and NSFLSSS.

It belongs to the bacterial CoaD family. In terms of assembly, homohexamer. Mg(2+) is required as a cofactor.

The protein resides in the cytoplasm. The enzyme catalyses (R)-4'-phosphopantetheine + ATP + H(+) = 3'-dephospho-CoA + diphosphate. It functions in the pathway cofactor biosynthesis; coenzyme A biosynthesis; CoA from (R)-pantothenate: step 4/5. Functionally, reversibly transfers an adenylyl group from ATP to 4'-phosphopantetheine, yielding dephospho-CoA (dPCoA) and pyrophosphate. The sequence is that of Phosphopantetheine adenylyltransferase from Clostridium kluyveri (strain ATCC 8527 / DSM 555 / NBRC 12016 / NCIMB 10680 / K1).